The primary structure comprises 102 residues: Omega-hexatoxin-Hi2a (102 aa).

Positions 1 to 23 (MKFSKLSLTLALILTQALLVVCG) are cleaved as a signal peptide. The propeptide occupies 24 to 56 (KINEDFMENGLESHALHDEIRKPIDTEKADAER). 3 disulfide bridges follow: Cys-61-Cys-75, Cys-68-Cys-81, and Cys-74-Cys-86. Leu-98 carries the leucine amide modification. Residues 100–102 (RAL) constitute a propeptide that is removed on maturation.

This sequence belongs to the neurotoxin 15 family. 02 (omega-actx) subfamily. Expressed by the venom gland.

Its subcellular location is the secreted. Potent inhibitor of insect, but not mammalian, voltage-gated calcium channels (Cav). The chain is Omega-hexatoxin-Hi2a from Hadronyche infensa (Fraser island funnel-web spider).